Consider the following 29-residue polypeptide: Photosystem I reaction center subunit XII (29 aa).

Residues 7 to 24 (FVALLLALVPAVLAYRLG) traverse the membrane as a helical segment.

This sequence belongs to the PsaM family.

The protein resides in the cellular thylakoid membrane. The polypeptide is Photosystem I reaction center subunit XII (Synechococcus sp. (strain ATCC 27144 / PCC 6301 / SAUG 1402/1) (Anacystis nidulans)).